Reading from the N-terminus, the 210-residue chain is Glutathione S-transferase mdpJ (210 aa).

Positions 2-83 constitute a GST N-terminal domain; that stretch reads SFGTLYTHNP…YCNDERSSLR (82 aa). Positions 77–200 constitute a GST C-terminal domain; that stretch reads DERSSLRILQ…VAGGVPDLGL (124 aa).

The protein belongs to the GST superfamily.

It participates in secondary metabolite biosynthesis. In terms of biological role, glutathione S-transferase; part of the gene cluster that mediates the biosynthesis of monodictyphenone, a prenyl xanthone derivative. The pathway begins with the synthesis of atrochrysone thioester by the polyketide synthase (PKS) mdpG. The atrochrysone carboxyl ACP thioesterase mdpF then breaks the thioester bond and releases the atrochrysone carboxylic acid from mdpG. The atrochrysone carboxylic acid is then converted to atrochrysone which is further transformed into emodin anthrone. The next step is performed by the anthrone oxygenase mdpH that catalyzes the oxidation of emodinanthrone to emodin. Emodin is further modified to yield monodictyphenone via several steps involving mdpB, mdpC mdpJ, mdpK and mdpL. These enzymes with xptA, xptB and xptC are also proposed to be involved in the synthesis of shamixanthone from emodin. Especially, direct reduction of emodin by the short chain dehydrogenase mdpC followed by dehydration catalyzed by the scytalone dehydratase-like protein mdpB gives loss of oxygen and formation of chrysophanol intermediate in two simple steps. In Emericella nidulans (strain FGSC A4 / ATCC 38163 / CBS 112.46 / NRRL 194 / M139) (Aspergillus nidulans), this protein is Glutathione S-transferase mdpJ.